The sequence spans 373 residues: Putative gustatory receptor 10b (373 aa).

Residues 1 to 8 (MRVGKLCR) lie on the Cytoplasmic side of the membrane. The helical transmembrane segment at 9–29 (LALRFWMGLILVLGFSSHYYN) threads the bilayer. Topologically, residues 30–82 (PTRRRLVYSRILQTYDWLLMVINLGAFYLYYRYAMTYFLEGMFRRQGFVNQVS) are extracellular. The chain crosses the membrane as a helical span at residues 83-103 (TCNVFQQLLMAVTGTWLHFLF). At 104-132 (ERHVCQTYNELSRILKHDLKLKEHSRFYC) the chain is on the cytoplasmic side. Residues 133–153 (LAFLAKVYNFFHNFNFALSAI) form a helical membrane-spanning segment. Over 154–170 (MHWGLRPFNVWDLLANL) the chain is Extracellular. Residues 171 to 191 (YFVYNSLARDAILVAYVLLLL) form a helical membrane-spanning segment. The Cytoplasmic segment spans residues 192 to 230 (NLSEALRLNGQQEHDTYSDLMKQLRRRERLLRIGRRVHR). Residues 231-251 (MFAWLVAIALIYLVFFNTATI) traverse the membrane as a helical segment. The Extracellular segment spans residues 252 to 273 (YLGYTMFIQKHDALGLRGRGLK). The chain crosses the membrane as a helical span at residues 274–294 (MLLTVVSFLVILWDVVLLQVI). The Cytoplasmic portion of the chain corresponds to 295–350 (CEKLLAEENKICDCPEDVASSRTTYRQWEMSALRRAITRSSPENNVLGMFRMDMRC). Residues 351–371 (AFALISCSLSYGIIIIQIGYI) form a helical membrane-spanning segment. Topologically, residues 372-373 (PG) are extracellular.

It belongs to the insect chemoreceptor superfamily. Gustatory receptor (GR) family. Gr10a subfamily.

The protein resides in the cell membrane. Its function is as follows. Probable gustatory receptor which mediates acceptance or avoidance behavior, depending on its substrates. The sequence is that of Putative gustatory receptor 10b (Gr10b) from Drosophila melanogaster (Fruit fly).